Consider the following 361-residue polypeptide: Probable galacturonosyltransferase-like 7 (361 aa).

The helical; Signal-anchor for type II membrane protein transmembrane segment at Met-1–Ser-21 threads the bilayer. Residues Pro-22–Arg-361 lie on the Lumenal side of the membrane. Asn-217 carries N-linked (GlcNAc...) asparagine glycosylation.

It belongs to the glycosyltransferase 8 family.

Its subcellular location is the golgi apparatus membrane. The protein operates within glycan metabolism; pectin biosynthesis. Its function is as follows. May be involved in pectin and/or xylans biosynthesis in cell walls. In Arabidopsis thaliana (Mouse-ear cress), this protein is Probable galacturonosyltransferase-like 7 (GATL7).